A 269-amino-acid polypeptide reads, in one-letter code: Undecaprenyl-diphosphatase (269 aa).

8 consecutive transmembrane segments (helical) span residues 1–21 (MDIMHAAVLGILQGLTEILPI), 40–59 (GLTFDVGLHVGTLIALCVYF), 87–107 (FFIIAGTVPAAIAGKTLEKPI), 117–137 (LIALLLIAFGLLLALADTTGP), 147–166 (LRGALLIGLAQCLALIPGVS), 188–208 (FSFLLSLPIVAGAGILKMGEL), 220–240 (PLLAGMATSAVSGYLGVALLL), and 248–268 (LYPFVWYRLLAGGAVLAYLFA).

The protein belongs to the UppP family.

The protein resides in the cell inner membrane. The catalysed reaction is di-trans,octa-cis-undecaprenyl diphosphate + H2O = di-trans,octa-cis-undecaprenyl phosphate + phosphate + H(+). Catalyzes the dephosphorylation of undecaprenyl diphosphate (UPP). Confers resistance to bacitracin. The chain is Undecaprenyl-diphosphatase from Geobacter sulfurreducens (strain ATCC 51573 / DSM 12127 / PCA).